Consider the following 105-residue polypeptide: Phosphoribosyl-ATP pyrophosphatase (105 aa).

Belongs to the PRA-PH family.

It is found in the cytoplasm. It catalyses the reaction 1-(5-phospho-beta-D-ribosyl)-ATP + H2O = 1-(5-phospho-beta-D-ribosyl)-5'-AMP + diphosphate + H(+). It functions in the pathway amino-acid biosynthesis; L-histidine biosynthesis; L-histidine from 5-phospho-alpha-D-ribose 1-diphosphate: step 2/9. The sequence is that of Phosphoribosyl-ATP pyrophosphatase from Ruegeria pomeroyi (strain ATCC 700808 / DSM 15171 / DSS-3) (Silicibacter pomeroyi).